The primary structure comprises 473 residues: Suppressor of SWI4 1 homolog (473 aa).

The Brix domain occupies 29–292; the sequence is PHSFVFTRGC…LIKVQEGVGE (264 aa). A phosphoserine mark is found at serine 238 and serine 240. The interval 323–473 is disordered; it reads AQRQAQQAQN…GRGRPRKRVA (151 aa). Residues 324 to 334 are compositionally biased toward low complexity; the sequence is QRQAQQAQNVQ. Basic and acidic residues predominate over residues 335–360; it reads RKQEQREAHRKKSLEGMKKARVRGGD. The span at 376-388 shows a compositional bias: acidic residues; sequence GEDDDEQEDDDIE. Over residues 407 to 421 the composition is skewed to basic residues; that stretch reads KRKRLAKSPGQKRKR. Positions 422–444 are enriched in basic and acidic residues; that stretch reads REMDRGRGRLCDQKFPKPKDKSH. Lysine 438 carries the N6-acetyllysine modification. The segment covering 464-473 has biased composition (basic residues); the sequence is GRGRPRKRVA.

Its subcellular location is the nucleus. The protein resides in the nucleolus. In terms of biological role, may have a role in cell growth. In Pongo abelii (Sumatran orangutan), this protein is Suppressor of SWI4 1 homolog (PPAN).